Here is a 261-residue protein sequence, read N- to C-terminus: Ribonuclease PH (261 aa).

Phosphate-binding positions include Arg-86 and 124-126; that span reads GTR.

Belongs to the RNase PH family. As to quaternary structure, homohexameric ring arranged as a trimer of dimers.

It carries out the reaction tRNA(n+1) + phosphate = tRNA(n) + a ribonucleoside 5'-diphosphate. Phosphorolytic 3'-5' exoribonuclease that plays an important role in tRNA 3'-end maturation. Removes nucleotide residues following the 3'-CCA terminus of tRNAs; can also add nucleotides to the ends of RNA molecules by using nucleoside diphosphates as substrates, but this may not be physiologically important. Probably plays a role in initiation of 16S rRNA degradation (leading to ribosome degradation) during starvation. In Persephonella marina (strain DSM 14350 / EX-H1), this protein is Ribonuclease PH.